The chain runs to 412 residues: Proteasome-activating nucleotidase (412 aa).

A coiled-coil region spans residues 18 to 72; the sequence is YRYLVDRVAGMESQNQELKEQIRQLESDKRYIETQKIRYEREVRKLKSEIEHLKT. Residues 197-202 and His-336 contribute to the ATP site; that span reads GTGKTL. Residues 410–412 form a docks into pockets in the proteasome alpha-ring to cause gate opening region; it reads MFA.

Belongs to the AAA ATPase family. As to quaternary structure, homohexamer. The hexameric complex has a two-ring architecture resembling a top hat that caps the 20S proteasome core at one or both ends. Upon ATP-binding, the C-terminus of PAN interacts with the alpha-rings of the proteasome core by binding to the intersubunit pockets.

It localises to the cytoplasm. Functionally, ATPase which is responsible for recognizing, binding, unfolding and translocation of substrate proteins into the archaeal 20S proteasome core particle. Is essential for opening the gate of the 20S proteasome via an interaction with its C-terminus, thereby allowing substrate entry and access to the site of proteolysis. Thus, the C-termini of the proteasomal ATPase function like a 'key in a lock' to induce gate opening and therefore regulate proteolysis. Unfolding activity requires energy from ATP hydrolysis, whereas ATP binding alone promotes ATPase-20S proteasome association which triggers gate opening, and supports translocation of unfolded substrates. In Methanospirillum hungatei JF-1 (strain ATCC 27890 / DSM 864 / NBRC 100397 / JF-1), this protein is Proteasome-activating nucleotidase.